The chain runs to 141 residues: Hemoglobin subunit alpha-D (141 aa).

Residues 1–141 (MLTAEDKKLI…VAAVLAEKYR (141 aa)) form the Globin domain. The heme b site is built by His-58 and His-87.

This sequence belongs to the globin family. Heterotetramer of two alpha-D chains and two beta chains. As to expression, red blood cells.

In terms of biological role, involved in oxygen transport from the lung to the various peripheral tissues. The protein is Hemoglobin subunit alpha-D (HBAD) of Accipiter gentilis (Northern goshawk).